The primary structure comprises 728 residues: Polyribonucleotide nucleotidyltransferase (728 aa).

Residues D513 and D519 each contribute to the Mg(2+) site. The KH domain maps to 580-640 (PKVKMILIKP…EIVDLTVTYI (61 aa)). Residues 650-724 (ENVYEVKILR…ERGQIDLSKK (75 aa)) form the S1 motif domain.

This sequence belongs to the polyribonucleotide nucleotidyltransferase family. It depends on Mg(2+) as a cofactor.

The protein resides in the cytoplasm. The enzyme catalyses RNA(n+1) + phosphate = RNA(n) + a ribonucleoside 5'-diphosphate. Involved in mRNA degradation. Catalyzes the phosphorolysis of single-stranded polyribonucleotides processively in the 3'- to 5'-direction. The chain is Polyribonucleotide nucleotidyltransferase from Phytoplasma mali (strain AT).